The following is a 180-amino-acid chain: Large ribosomal subunit protein uL5c (180 aa).

This sequence belongs to the universal ribosomal protein uL5 family. As to quaternary structure, part of the 50S ribosomal subunit; contacts the 5S rRNA.

The protein resides in the plastid. It is found in the chloroplast. Functionally, binds 5S rRNA, forms part of the central protuberance of the 50S subunit. The protein is Large ribosomal subunit protein uL5c (rpl5) of Chlorella vulgaris (Green alga).